We begin with the raw amino-acid sequence, 127 residues long: Small ribosomal subunit protein uS13 (127 aa).

Positions 93–127 (RRSLPVRGQRTHTNARTRKGPRRGTVAGKKKATKT) are disordered.

Belongs to the universal ribosomal protein uS13 family. Part of the 30S ribosomal subunit. Forms a loose heterodimer with protein S19. Forms two bridges to the 50S subunit in the 70S ribosome.

In terms of biological role, located at the top of the head of the 30S subunit, it contacts several helices of the 16S rRNA. In the 70S ribosome it contacts the 23S rRNA (bridge B1a) and protein L5 of the 50S subunit (bridge B1b), connecting the 2 subunits; these bridges are implicated in subunit movement. Contacts the tRNAs in the A and P-sites. The chain is Small ribosomal subunit protein uS13 from Acidobacterium capsulatum (strain ATCC 51196 / DSM 11244 / BCRC 80197 / JCM 7670 / NBRC 15755 / NCIMB 13165 / 161).